The primary structure comprises 70 residues: U-actitoxin-Ael2c (70 aa).

Residues 1-21 form the signal peptide; the sequence is SYQRFLFLVVVASLIATSLAI. Positions 22-26 are excised as a propeptide; sequence PKDLE. Disulfide bonds link C32/C65, C34/C58, and C48/C66.

This sequence belongs to the sea anemone type 3 (BDS) potassium channel toxin family.

The protein resides in the secreted. It is found in the nematocyst. Its function is as follows. Potently and selectively inhibits voltage-gated potassium channels Kv11/KCNH/ERG. Acts as a gating-modifier toxin that shifts the voltage-dependence of ERG activation in the positive direction and suppresses its current amplitudes elicited by strong depolarizing pulses that maximally activate the channels. The sequence is that of U-actitoxin-Ael2c from Anthopleura elegantissima (Green aggregating anemone).